The chain runs to 308 residues: MASSHTVLMRLVASAYSIAQKAGTIVRCVIAEGDLGIVQKTSATDLQTKADRLVQMSICSSLARKFPKLTIIGEEDLPPGEVDQELIEDGQWEEILKQPCPSQYSAIKEEDLVVWVDPLDGTKEYTEGLLDNVTVLIGIAYEGKAIAGIINQPYYNYQAGPDAALGRTIWGVLGLGAFGFQLKEAPAGKHIITTTRSHSNQLVTDCISAMNPDTVLRVGGAGNKIIQLIEGKASAYVFASPGCKKWDTCAPEVILHAVGGKLTDIHGNALQYNKEVKHMNSAGVLAALRNYEYYASHVPESVKNALIP.

Ala-2 carries the N-acetylalanine modification. Asp-51 (proton acceptor) is an active-site residue. 4 residues coordinate Mg(2+): Glu-74, Asp-117, Leu-119, and Asp-120. Thr-122 functions as the Proton acceptor in the catalytic mechanism. Thr-122 carries the post-translational modification Phosphothreonine. Positions 195, 198, 220, and 224 each coordinate AMP. Position 240 is a phosphoserine (Ser-240). Lys-244 is subject to N6-succinyllysine. Mg(2+) is bound at residue Asp-247.

The protein belongs to the inositol monophosphatase superfamily. The cofactor is Mg(2+). Widely expressed. Highly expressed in kidney.

The catalysed reaction is adenosine 3',5'-bisphosphate + H2O = AMP + phosphate. The enzyme catalyses adenosine 2',5'-bisphosphate + H2O = AMP + phosphate. It catalyses the reaction 3'-phosphoadenylyl sulfate + H2O = adenosine 5'-phosphosulfate + phosphate. It carries out the reaction 1D-myo-inositol 1,4-bisphosphate + H2O = 1D-myo-inositol 4-phosphate + phosphate. The catalysed reaction is 1D-myo-inositol 1,3,4-trisphosphate + H2O = 1D-myo-inositol 3,4-bisphosphate + phosphate. Its activity is regulated as follows. Uncompetitively inhibited by Li(+) (IC(50)=157 uM). PAP hydrolysis is competitively inhibited by PAPS (IC(50)=0.7 uM) and by inositol 1,4-bisphosphate (IC(50)=15 uM). Phosphatase that converts 3'(2')-phosphoadenosine 5'-phosphate (PAP) to AMP and adenosine 3'-phosphate 5'-phosphosulfate (PAPS) to adenosine 5'-phosphosulfate (APS). Is also able to hydrolyze inositol 1,4-bisphosphate (Ins(1,4)P2) and inositol 1,3,4-trisphosphate (Ins(1,3,4)P3), and is not active on Ins(1)P, Ins(4)P, Ins(3,4)P2, Ins(1,4,5)P3, Ins(1,3,4,5)P4, Ins(1,3,4,5,6)P5 or InsP6. Probably prevents the toxic accumulation of PAP, a compound which inhibits a variety of proteins, including PAPS-utilizing enzymes such as sulfotransferases, and RNA processing enzymes. Could also play a role in inositol recycling and phosphoinositide metabolism. The chain is 3'(2'),5'-bisphosphate nucleotidase 1 (Bpnt1) from Mus musculus (Mouse).